A 177-amino-acid polypeptide reads, in one-letter code: Large ribosomal subunit protein uL6 (177 aa).

The protein belongs to the universal ribosomal protein uL6 family. As to quaternary structure, part of the 50S ribosomal subunit.

Functionally, this protein binds to the 23S rRNA, and is important in its secondary structure. It is located near the subunit interface in the base of the L7/L12 stalk, and near the tRNA binding site of the peptidyltransferase center. The sequence is that of Large ribosomal subunit protein uL6 from Rhodopseudomonas palustris (strain BisA53).